Reading from the N-terminus, the 205-residue chain is TATA-box-binding protein (205 aa).

Repeat copies occupy residues 27 to 103 and 117 to 194.

Belongs to the TBP family. Belongs to the TFIID complex together with the TBP-associated factors (TAFs). Binds DNA as monomer.

Its subcellular location is the nucleus. In terms of biological role, general transcription factor that functions at the core of the DNA-binding multiprotein factor TFIID. Binding of TFIID to the TATA box is the initial transcriptional step of the pre-initiation complex (PIC), playing a role in the activation of eukaryotic genes transcribed by RNA polymerase II. In Dictyostelium discoideum (Social amoeba), this protein is TATA-box-binding protein (tbpA).